Reading from the N-terminus, the 316-residue chain is uncharacterized protein (316 aa).

The next 4 membrane-spanning stretches (helical) occupy residues 74–94 (IPVL…GMAI), 99–119 (WPYA…IFLG), 166–186 (MAGC…TVLG), and 188–208 (VEGF…GYIF).

The protein localises to the cell membrane. This is an uncharacterized protein from Synechocystis sp. (strain ATCC 27184 / PCC 6803 / Kazusa).